The following is a 295-amino-acid chain: 4-diphosphocytidyl-2-C-methyl-D-erythritol kinase (295 aa).

Residue lysine 22 is part of the active site. ATP is bound at residue 106–116 (PAGGGFGGGSS). Aspartate 148 is a catalytic residue.

It belongs to the GHMP kinase family. IspE subfamily.

The enzyme catalyses 4-CDP-2-C-methyl-D-erythritol + ATP = 4-CDP-2-C-methyl-D-erythritol 2-phosphate + ADP + H(+). It participates in isoprenoid biosynthesis; isopentenyl diphosphate biosynthesis via DXP pathway; isopentenyl diphosphate from 1-deoxy-D-xylulose 5-phosphate: step 3/6. In terms of biological role, catalyzes the phosphorylation of the position 2 hydroxy group of 4-diphosphocytidyl-2C-methyl-D-erythritol. This is 4-diphosphocytidyl-2-C-methyl-D-erythritol kinase from Xanthomonas euvesicatoria pv. vesicatoria (strain 85-10) (Xanthomonas campestris pv. vesicatoria).